A 316-amino-acid polypeptide reads, in one-letter code: Porphobilinogen deaminase (316 aa).

Cysteine 245 bears the S-(dipyrrolylmethanemethyl)cysteine mark.

This sequence belongs to the HMBS family. In terms of assembly, monomer. Dipyrromethane serves as cofactor.

The catalysed reaction is 4 porphobilinogen + H2O = hydroxymethylbilane + 4 NH4(+). It participates in porphyrin-containing compound metabolism; protoporphyrin-IX biosynthesis; coproporphyrinogen-III from 5-aminolevulinate: step 2/4. Its pathway is porphyrin-containing compound metabolism; chlorophyll biosynthesis. Its function is as follows. Tetrapolymerization of the monopyrrole PBG into the hydroxymethylbilane pre-uroporphyrinogen in several discrete steps. This is Porphobilinogen deaminase from Prochlorococcus marinus (strain MIT 9515).